The chain runs to 257 residues: Putative cysteine-rich repeat secretory protein 28 (257 aa).

The first 26 residues, methionine 1–serine 26, serve as a signal peptide directing secretion. 2 Gnk2-homologous domains span residues alanine 32–serine 136 and tyrosine 142–phenylalanine 254.

This sequence belongs to the cysteine-rich repeat secretory protein family.

The protein resides in the secreted. The polypeptide is Putative cysteine-rich repeat secretory protein 28 (CRRSP28) (Arabidopsis thaliana (Mouse-ear cress)).